Here is a 348-residue protein sequence, read N- to C-terminus: Ninja-family protein AFP2 (348 aa).

The interval 186–272 (DSDGGGATGG…VDRKGKGMAT (87 aa)) is disordered. A compositionally biased stretch (gly residues) spans 187–197 (SDGGGATGGGS). Composition is skewed to polar residues over residues 207-216 (KNQQGSSNSC) and 228-244 (CSSN…SVTR). Residues 247 to 267 (KVNENENEKRVRSEDSVDRKG) show a composition bias toward basic and acidic residues.

It belongs to the Ninja family. Forms a homodimer and heterodimer with AFP1 and AFP3. Interacts with ABI5/DPBF1, DPBF2, AREB3/DPBF3, EEL/DPBF4, ABF1, ABF3/DPBF5 and ABF4/AREB2.

It is found in the nucleus. Acts as a negative regulator of abscisic acid (ABA) response during germination through the ubiquitin-mediated proteolysis of ABI5/DPBF1. This is Ninja-family protein AFP2 (AFP2) from Arabidopsis thaliana (Mouse-ear cress).